Consider the following 232-residue polypeptide: tRNA (guanine-N(1)-)-methyltransferase (232 aa).

Residues glycine 111 and 131–136 (IGDYIL) contribute to the S-adenosyl-L-methionine site.

The protein belongs to the RNA methyltransferase TrmD family. As to quaternary structure, homodimer.

The protein resides in the cytoplasm. It carries out the reaction guanosine(37) in tRNA + S-adenosyl-L-methionine = N(1)-methylguanosine(37) in tRNA + S-adenosyl-L-homocysteine + H(+). In terms of biological role, specifically methylates guanosine-37 in various tRNAs. The polypeptide is tRNA (guanine-N(1)-)-methyltransferase (Bartonella bacilliformis (strain ATCC 35685 / KC583 / Herrer 020/F12,63)).